We begin with the raw amino-acid sequence, 553 residues long: MQQLEQDFPGNDIDDIEDLISAEDVKPQERYQNKKSVTVRAKKRVQIKPETDAEEKPTPRPTIYESVIPGTQKVFVKTWGCAHNNSDSEYMAGQLAAYGYKLSGKDEADLWLLNSCTVKNPSEDTFRNEIESGMSNGKHIVVAGCVPQGAPKSDYLRGLSVIGVQQIDRVVEVVEETLKGHSVRLLQNKKVHGRRVAGAPLSLPKVRKNPLIEIISINTGCLNQCTYCKTKHARGDLASYPPEEIVDRARQSFAEGCCEIWLTSEDTGAYGRDIGSSLPELLWKLVEVIPEHCMLRVGMTNPPYILEHLEEVAKVLQHPRVYAFLHVPVQSGSDSVLGEMKREYCRKDFEHVVDFLRERVPGVTIATDIICGFPTETEEDFEETMTLCGRYRFPSLFINQFFPRPGTPAAKMERIPANLVKKRTKRLTDLFYSYEPYAQRVGEMYTVLVTEISHDKLHYVGHNKSYEQVLLPMRDNLLGTRVHVRITSVSKFSMVGEILDDERDWTRCAKKQEAPMELTITGRNRDKLIQRYVGIALVVGSLAFLLQLLIRFL.

The interval 21–61 (SAEDVKPQERYQNKKSVTVRAKKRVQIKPETDAEEKPTPRP) is disordered. Composition is skewed to basic and acidic residues over residues 23–32 (EDVKPQERYQ) and 47–58 (IKPETDAEEKPT). The MTTase N-terminal domain occupies 72-179 (QKVFVKTWGC…VVEVVEETLK (108 aa)). Positions 81, 116, 145, 221, 225, and 228 each coordinate [4Fe-4S] cluster. Positions 207-438 (RKNPLIEIIS…DLFYSYEPYA (232 aa)) constitute a Radical SAM core domain. The 63-residue stretch at 438–500 (AQRVGEMYTV…KFSMVGEILD (63 aa)) folds into the TRAM domain. A helical transmembrane segment spans residues 533 to 553 (VGIALVVGSLAFLLQLLIRFL).

This sequence belongs to the methylthiotransferase family. CDKAL1 subfamily. The cofactor is [4Fe-4S] cluster.

The protein localises to the membrane. The enzyme catalyses N(6)-L-threonylcarbamoyladenosine(37) in tRNA + (sulfur carrier)-SH + AH2 + 2 S-adenosyl-L-methionine = 2-methylsulfanyl-N(6)-L-threonylcarbamoyladenosine(37) in tRNA + (sulfur carrier)-H + 5'-deoxyadenosine + L-methionine + A + S-adenosyl-L-homocysteine + 2 H(+). Functionally, catalyzes the methylthiolation of N6-threonylcarbamoyladenosine (t(6)A), leading to the formation of 2-methylthio-N6-threonylcarbamoyladenosine (ms(2)t(6)A) at position 37 in tRNAs that read codons beginning with adenine. The protein is Threonylcarbamoyladenosine tRNA methylthiotransferase of Drosophila pseudoobscura pseudoobscura (Fruit fly).